The chain runs to 392 residues: Selenide, water dikinase 1 (392 aa).

Residue Cys31 is part of the active site. ATP is bound by residues Lys32, 67-69 (GMD), Asp87, Asp110, and 161-164 (GGQT). Residue Asp69 coordinates Mg(2+). Asp110 serves as a coordination point for Mg(2+). Asp265 lines the Mg(2+) pocket.

The protein belongs to the selenophosphate synthase 1 family. Class II subfamily. Homodimer. It depends on Mg(2+) as a cofactor.

It is found in the cell membrane. Its subcellular location is the nucleus membrane. It catalyses the reaction hydrogenselenide + ATP + H2O = selenophosphate + AMP + phosphate + 2 H(+). Functionally, synthesizes selenophosphate from selenide and ATP. This Xenopus laevis (African clawed frog) protein is Selenide, water dikinase 1 (sephs1).